The primary structure comprises 837 residues: Valine--tRNA ligase (837 aa).

Positions 46–56 (PNLTGTLHIGH) match the 'HIGH' region motif. Residues 514–518 (KMSKS) carry the 'KMSKS' region motif. Residue lysine 517 participates in ATP binding. The stretch at 767 to 837 (VDDTTQRLKS…QLIAKLTKAH (71 aa)) forms a coiled coil.

Belongs to the class-I aminoacyl-tRNA synthetase family. ValS type 1 subfamily. In terms of assembly, monomer.

Its subcellular location is the cytoplasm. It catalyses the reaction tRNA(Val) + L-valine + ATP = L-valyl-tRNA(Val) + AMP + diphosphate. In terms of biological role, catalyzes the attachment of valine to tRNA(Val). As ValRS can inadvertently accommodate and process structurally similar amino acids such as threonine, to avoid such errors, it has a 'posttransfer' editing activity that hydrolyzes mischarged Thr-tRNA(Val) in a tRNA-dependent manner. This Mycoplasma genitalium (strain ATCC 33530 / DSM 19775 / NCTC 10195 / G37) (Mycoplasmoides genitalium) protein is Valine--tRNA ligase.